Consider the following 219-residue polypeptide: Oxaloacetate tautomerase YcgM (219 aa).

Residues Glu-70, Glu-72, and Asp-101 each coordinate Mg(2+).

The protein belongs to the FAH family. Requires a divalent metal cation as cofactor.

The enzyme catalyses oxaloacetate = enol-oxaloacetate. Tautomerase that converts enol-oxaloacetate to the keto form of oxaloacetate. This Escherichia coli (strain K12) protein is Oxaloacetate tautomerase YcgM.